Here is a 66-residue protein sequence, read N- to C-terminus: COP-associated protein (66 aa).

The 66-residue stretch at 1–66 folds into the HMA domain; the sequence is MKATFQVPSI…ALLDAGQEVV (66 aa). Positions 12 and 15 each coordinate Cu cation. A disulfide bridge links Cys12 with Cys15.

Its function is as follows. Part of a cation-transporting system which is associated with copper export out of the H.pylori cells. The sequence is that of COP-associated protein (copP) from Helicobacter pylori (strain ATCC 700392 / 26695) (Campylobacter pylori).